A 340-amino-acid chain; its full sequence is 4-hydroxy-3-methylbut-2-enyl diphosphate reductase (340 aa).

C19 lines the [4Fe-4S] cluster pocket. (2E)-4-hydroxy-3-methylbut-2-enyl diphosphate-binding residues include H50 and H90. Positions 50 and 90 each coordinate dimethylallyl diphosphate. The isopentenyl diphosphate site is built by H50 and H90. [4Fe-4S] cluster is bound at residue C112. Residue H141 coordinates (2E)-4-hydroxy-3-methylbut-2-enyl diphosphate. H141 serves as a coordination point for dimethylallyl diphosphate. Position 141 (H141) interacts with isopentenyl diphosphate. E143 functions as the Proton donor in the catalytic mechanism. T190 is a (2E)-4-hydroxy-3-methylbut-2-enyl diphosphate binding site. [4Fe-4S] cluster is bound at residue C220. Residues S248, S249, N250, and S292 each coordinate (2E)-4-hydroxy-3-methylbut-2-enyl diphosphate. Residues S248, S249, N250, and S292 each contribute to the dimethylallyl diphosphate site. Isopentenyl diphosphate contacts are provided by S248, S249, N250, and S292.

The protein belongs to the IspH family. The cofactor is [4Fe-4S] cluster.

The enzyme catalyses isopentenyl diphosphate + 2 oxidized [2Fe-2S]-[ferredoxin] + H2O = (2E)-4-hydroxy-3-methylbut-2-enyl diphosphate + 2 reduced [2Fe-2S]-[ferredoxin] + 2 H(+). It carries out the reaction dimethylallyl diphosphate + 2 oxidized [2Fe-2S]-[ferredoxin] + H2O = (2E)-4-hydroxy-3-methylbut-2-enyl diphosphate + 2 reduced [2Fe-2S]-[ferredoxin] + 2 H(+). The protein operates within isoprenoid biosynthesis; dimethylallyl diphosphate biosynthesis; dimethylallyl diphosphate from (2E)-4-hydroxy-3-methylbutenyl diphosphate: step 1/1. It participates in isoprenoid biosynthesis; isopentenyl diphosphate biosynthesis via DXP pathway; isopentenyl diphosphate from 1-deoxy-D-xylulose 5-phosphate: step 6/6. Functionally, catalyzes the conversion of 1-hydroxy-2-methyl-2-(E)-butenyl 4-diphosphate (HMBPP) into a mixture of isopentenyl diphosphate (IPP) and dimethylallyl diphosphate (DMAPP). Acts in the terminal step of the DOXP/MEP pathway for isoprenoid precursor biosynthesis. This Thermus thermophilus (strain ATCC BAA-163 / DSM 7039 / HB27) protein is 4-hydroxy-3-methylbut-2-enyl diphosphate reductase.